A 546-amino-acid chain; its full sequence is Glucose-6-phosphate isomerase (546 aa).

The active-site Proton donor is E352. Residues H383 and K511 contribute to the active site.

This sequence belongs to the GPI family.

Its subcellular location is the cytoplasm. The enzyme catalyses alpha-D-glucose 6-phosphate = beta-D-fructose 6-phosphate. It functions in the pathway carbohydrate biosynthesis; gluconeogenesis. The protein operates within carbohydrate degradation; glycolysis; D-glyceraldehyde 3-phosphate and glycerone phosphate from D-glucose: step 2/4. Its function is as follows. Catalyzes the reversible isomerization of glucose-6-phosphate to fructose-6-phosphate. In Paramagnetospirillum magneticum (strain ATCC 700264 / AMB-1) (Magnetospirillum magneticum), this protein is Glucose-6-phosphate isomerase.